The sequence spans 248 residues: MIAPLANSAVKPHKSASFVPRHVAIIMDGNGRWASARHLPRIAGHKKGADAVKTTVRAAAEMGIEVLTLYAFSSENWRRPASEVADLMGLLRLCLRQEMHNIKERGICLKVIGDYTRLDQDLVALLNQAIEITANNTRLTLVFALNYGAQDELVHVTKRIAEKAKEGQLDPENIDVGTIESLLYTHDLPPLDLVIRTSGEKRLSNFLLWQAAYAELLFIDTLWPDFGSETLKAAVEEYARRERRYGGL.

D28 is a catalytic residue. Residue D28 participates in Mg(2+) binding. Residues 29–32 (GNGR), W33, R41, H45, and 73–75 (SSE) contribute to the substrate site. N76 (proton acceptor) is an active-site residue. Residues W77, R79, R196, and 202-204 (RLS) contribute to the substrate site. E215 contacts Mg(2+).

It belongs to the UPP synthase family. In terms of assembly, homodimer. Requires Mg(2+) as cofactor.

Catalyzes the condensation of isopentenyl diphosphate (IPP) with allylic pyrophosphates generating different type of terpenoids. The polypeptide is Isoprenyl transferase (Zymomonas mobilis subsp. mobilis (strain ATCC 31821 / ZM4 / CP4)).